The primary structure comprises 261 residues: MAHQAHAYHMVDPSPWPLTGAIAALLLTSGTAVWFHFHSLTLLTLGNILLLLTMYQWWRDIIREGTFQGHHTPPVQKGLRYGMILFITSEVFFFLGFFWAFYHASLAPTPELGGCWPPTGITTLDPFEVPLLNTAVLLASGVTVTWAHHSIMEGERKQTIQALTLTILLGFYFTFLQGMEYYEAPFTIADGVYGSTFFVATGFHGLHVIIGSTFLAVCLLRQVQYHFTSEHHFGFEAAAWYWHFVDVVWLFLYVSIYWWGS.

At 1–15 (MAHQAHAYHMVDPSP) the chain is on the mitochondrial matrix side. A helical transmembrane segment spans residues 16 to 34 (WPLTGAIAALLLTSGTAVW). Over 35–40 (FHFHSL) the chain is Mitochondrial intermembrane. A helical transmembrane segment spans residues 41–66 (TLLTLGNILLLLTMYQWWRDIIREGT). At 67–72 (FQGHHT) the chain is on the mitochondrial matrix side. The chain crosses the membrane as a helical span at residues 73–105 (PPVQKGLRYGMILFITSEVFFFLGFFWAFYHAS). The Mitochondrial intermembrane portion of the chain corresponds to 106–128 (LAPTPELGGCWPPTGITTLDPFE). A helical transmembrane segment spans residues 129 to 152 (VPLLNTAVLLASGVTVTWAHHSIM). The Mitochondrial matrix portion of the chain corresponds to 153-155 (EGE). The helical transmembrane segment at 156 to 183 (RKQTIQALTLTILLGFYFTFLQGMEYYE) threads the bilayer. The Mitochondrial intermembrane segment spans residues 184-190 (APFTIAD). A helical membrane pass occupies residues 191–223 (GVYGSTFFVATGFHGLHVIIGSTFLAVCLLRQV). Over 224-232 (QYHFTSEHH) the chain is Mitochondrial matrix. Residues 233–256 (FGFEAAAWYWHFVDVVWLFLYVSI) traverse the membrane as a helical segment. At 257-261 (YWWGS) the chain is on the mitochondrial intermembrane side.

Belongs to the cytochrome c oxidase subunit 3 family. Component of the cytochrome c oxidase (complex IV, CIV), a multisubunit enzyme composed of 14 subunits. The complex is composed of a catalytic core of 3 subunits MT-CO1, MT-CO2 and MT-CO3, encoded in the mitochondrial DNA, and 11 supernumerary subunits COX4I, COX5A, COX5B, COX6A, COX6B, COX6C, COX7A, COX7B, COX7C, COX8 and NDUFA4, which are encoded in the nuclear genome. The complex exists as a monomer or a dimer and forms supercomplexes (SCs) in the inner mitochondrial membrane with NADH-ubiquinone oxidoreductase (complex I, CI) and ubiquinol-cytochrome c oxidoreductase (cytochrome b-c1 complex, complex III, CIII), resulting in different assemblies (supercomplex SCI(1)III(2)IV(1) and megacomplex MCI(2)III(2)IV(2)).

The protein resides in the mitochondrion inner membrane. The catalysed reaction is 4 Fe(II)-[cytochrome c] + O2 + 8 H(+)(in) = 4 Fe(III)-[cytochrome c] + 2 H2O + 4 H(+)(out). Its function is as follows. Component of the cytochrome c oxidase, the last enzyme in the mitochondrial electron transport chain which drives oxidative phosphorylation. The respiratory chain contains 3 multisubunit complexes succinate dehydrogenase (complex II, CII), ubiquinol-cytochrome c oxidoreductase (cytochrome b-c1 complex, complex III, CIII) and cytochrome c oxidase (complex IV, CIV), that cooperate to transfer electrons derived from NADH and succinate to molecular oxygen, creating an electrochemical gradient over the inner membrane that drives transmembrane transport and the ATP synthase. Cytochrome c oxidase is the component of the respiratory chain that catalyzes the reduction of oxygen to water. Electrons originating from reduced cytochrome c in the intermembrane space (IMS) are transferred via the dinuclear copper A center (CU(A)) of subunit 2 and heme A of subunit 1 to the active site in subunit 1, a binuclear center (BNC) formed by heme A3 and copper B (CU(B)). The BNC reduces molecular oxygen to 2 water molecules using 4 electrons from cytochrome c in the IMS and 4 protons from the mitochondrial matrix. The protein is Cytochrome c oxidase subunit 3 (mt-co3) of Oncorhynchus clarkii (Cutthroat trout).